The primary structure comprises 207 residues: Cytochrome c biogenesis ATP-binding export protein CcmA (207 aa).

In terms of domain architecture, ABC transporter spans 6–207; it reads LCAEGLECIR…RGDCRSLNLS (202 aa). 38-45 provides a ligand contact to ATP; sequence GANGAGKT.

It belongs to the ABC transporter superfamily. CcmA exporter (TC 3.A.1.107) family. As to quaternary structure, the complex is composed of two ATP-binding proteins (CcmA) and two transmembrane proteins (CcmB).

It localises to the cell inner membrane. The enzyme catalyses heme b(in) + ATP + H2O = heme b(out) + ADP + phosphate + H(+). In terms of biological role, part of the ABC transporter complex CcmAB involved in the biogenesis of c-type cytochromes; once thought to export heme, this seems not to be the case, but its exact role is uncertain. Responsible for energy coupling to the transport system. The polypeptide is Cytochrome c biogenesis ATP-binding export protein CcmA (Methylococcus capsulatus (strain ATCC 33009 / NCIMB 11132 / Bath)).